Here is a 1006-residue protein sequence, read N- to C-terminus: Kinesin-like protein KIN-5C (1006 aa).

The 347-residue stretch at 9 to 355 (NVQVLLRCRP…LDYAHRAKNI (347 aa)) folds into the Kinesin motor domain. An ATP-binding site is contributed by 95-102 (GQTGTGKT). Positions 371-522 (IKDLYGEIER…NASLFQKIAR (152 aa)) form a coiled coil.

The protein belongs to the TRAFAC class myosin-kinesin ATPase superfamily. Kinesin family. KIN-5/BimC subfamily.

It localises to the cytoplasm. Its subcellular location is the cytoskeleton. It is found in the spindle. In terms of biological role, responsible for microtubule translocation. May be important for the organization of phragmoplast-specific arrays of microtubules. Plays an essential role in stabilizing the mitotic spindle. Required during mitotic cytokinesis. This chain is Kinesin-like protein KIN-5C, found in Nicotiana tabacum (Common tobacco).